Reading from the N-terminus, the 589-residue chain is V-type ATP synthase alpha chain 1 (589 aa).

Residue 239–246 coordinates ATP; sequence GPFGAGKT.

It belongs to the ATPase alpha/beta chains family.

The catalysed reaction is ATP + H2O + 4 H(+)(in) = ADP + phosphate + 5 H(+)(out). Produces ATP from ADP in the presence of a proton gradient across the membrane. The V-type alpha chain is a catalytic subunit. The polypeptide is V-type ATP synthase alpha chain 1 (atpA1) (Treponema pallidum (strain Nichols)).